Reading from the N-terminus, the 711-residue chain is Forkhead box protein P1 (711 aa).

Residues 1 to 19 are compositionally biased toward polar residues; it reads MMQESGSEAKSNGSTIQNG. Residues 1 to 41 are disordered; sequence MMQESGSEAKSNGSTIQNGSSGGNHLLECGTLRDTRSNGEA. Residue Ser115 is modified to Phosphoserine. Disordered stretches follow at residues 273-292 and 305-332; these read HTAE…TSTC and MNPH…EHPH. Polar residues predominate over residues 305 to 317; it reads MNPHASTNGQLSV. Residues 320–332 are compositionally biased toward basic and acidic residues; sequence PKRESLSHEEHPH. Lys321 participates in a covalent cross-link: Glycyl lysine isopeptide (Lys-Gly) (interchain with G-Cter in SUMO2). A C2H2-type zinc finger spans residues 340–365; sequence GVCKWPGCEAVCDDFPAFLKHLNSEH. Residues 382–403 are leucine-zipper; that stretch reads VQQLELQLAKDKERLQAMMTHL. Glycyl lysine isopeptide (Lys-Gly) (interchain with G-Cter in SUMO2) cross-links involve residues Lys406 and Lys411. The interval 416 to 420 is CTBP1-binding; that stretch reads PLNLV. Over residues 424–437 the composition is skewed to polar residues; it reads TLSKSASEASPQSL. A disordered region spans residues 424–456; it reads TLSKSASEASPQSLPHTPTTPTAPLTPVTQGPS. Positions 438–452 are enriched in low complexity; that stretch reads PHTPTTPTAPLTPVT. Lys476 participates in a covalent cross-link: Glycyl lysine isopeptide (Lys-Gly) (interchain with G-Cter in SUMO2). Residues 499-589 constitute a DNA-binding region (fork-head); the sequence is RPPFTYASLI…PQKISGNPSL (91 aa). Residues 645–711 are disordered; sequence EHTNSNESDS…EDEPVNEDME (67 aa). Residues 646 to 657 are compositionally biased toward polar residues; the sequence is HTNSNESDSSPG. Thr687 carries the post-translational modification Phosphothreonine. Ser692 is subject to Phosphoserine. Residues 701–711 show a composition bias toward acidic residues; the sequence is YEDEPVNEDME.

As to quaternary structure, forms homodimers and heterodimers with FOXP2 and FOXP4. Dimerization is required for DNA-binding. Self-associates. Interacts with CTBP1. Interacts with NCOR2 and AR. Interacts with FOXP2. Interacts with TBR1. Interacts with AURKA; this interaction facilitates the phosphorylation of FOXP1, which suppresses the expression of FBXL7. Interacts with ZMYM2.

It localises to the nucleus. Its function is as follows. Transcriptional repressor. Can act with CTBP1 to synergistically repress transcription but CTPBP1 is not essential. Plays an important role in the specification and differentiation of lung epithelium. Acts cooperatively with FOXP4 to regulate lung secretory epithelial cell fate and regeneration by restricting the goblet cell lineage program; the function may involve regulation of AGR2. Essential transcriptional regulator of B-cell development. Involved in regulation of cardiac muscle cell proliferation. Involved in the columnar organization of spinal motor neurons. Promotes the formation of the lateral motor neuron column (LMC) and the preganglionic motor column (PGC) and is required for respective appropriate motor axon projections. The segment-appropriate generation of spinal cord motor columns requires cooperation with other Hox proteins. Can regulate PITX3 promoter activity; may promote midbrain identity in embryonic stem cell-derived dopamine neurons by regulating PITX3. Negatively regulates the differentiation of T follicular helper cells T(FH)s. Involved in maintenance of hair follicle stem cell quiescence; the function probably involves regulation of FGF18. Represses transcription of various pro-apoptotic genes and cooperates with NF-kappa B-signaling in promoting B-cell expansion by inhibition of caspase-dependent apoptosis. Binds to CSF1R promoter elements and is involved in regulation of monocyte differentiation and macrophage functions; repression of CSF1R in monocytes seems to involve NCOR2 as corepressor. Involved in endothelial cell proliferation, tube formation and migration indicative for a role in angiogenesis; the role in neovascularization seems to implicate suppression of SEMA5B. Can negatively regulate androgen receptor signaling. Acts as a transcriptional activator of the FBXL7 promoter; this activity is regulated by AURKA. This is Forkhead box protein P1 (Foxp1) from Rattus norvegicus (Rat).